Here is a 66-residue protein sequence, read N- to C-terminus: Large ribosomal subunit protein bL33c (66 aa).

The protein belongs to the bacterial ribosomal protein bL33 family.

Its subcellular location is the plastid. The protein localises to the chloroplast. The polypeptide is Large ribosomal subunit protein bL33c (Chloranthus spicatus (Chulantree)).